A 263-amino-acid chain; its full sequence is Glycerol uptake facilitator protein (263 aa).

Residues 1–7 are Cytoplasmic-facing; it reads MNIYRKK. Residues 8-36 form a helical membrane-spanning segment; the sequence is NIIKKCFMEFFGTGLVMFFGIGCLAASKL. The Extracellular segment spans residues 37-41; the sequence is TNANF. A helical transmembrane segment spans residues 42 to 62; sequence TQFEISCIWGFGVSIAIYFSS. The Cytoplasmic portion of the chain corresponds to 63-65; the sequence is SIS. Residues 66 to 69 lie within the membrane without spanning it; that stretch reads GAHL. The NPA 1 signature appears at 70 to 72; the sequence is NPA. The segment at residues 70–80 is an intramembrane region (helical); sequence NPAVTIFFWLS. Over 81 to 86 the chain is Cytoplasmic; it reads SKLNKR. The helical transmembrane segment at 87–110 threads the bilayer; that stretch reads KVLPYIISQTLGSFFFTMLTYYLY. The Extracellular segment spans residues 111–145; that stretch reads NNLLISFERNNNVVRGTQESLNLASIFCVYPNYNN. A helical transmembrane segment spans residues 146–171; the sequence is SFIYDFIIEIFSTALFILIVLEFNNR. The Cytoplasmic portion of the chain corresponds to 172 to 181; it reads NSNYFLYNRS. Residues 182-198 form a helical membrane-spanning segment; it reads VAPILTGFLVCMINLVI. The Extracellular segment spans residues 199 to 202; the sequence is NPLN. Residues 203–206 lie within the membrane without spanning it; sequence NISL. The short motif at 207 to 209 is the NPA 2 element; it reads NPA. An intramembrane region (helical) is located at residues 207-220; sequence NPARDLGPKILLSL. Over 221-236 the chain is Extracellular; sequence TGWGLFSFTGGNDNIL. A helical membrane pass occupies residues 237-259; it reads YCFIPIMGPILGANLGGWIHKTL. The Cytoplasmic segment spans residues 260–263; the sequence is INNS.

Belongs to the MIP/aquaporin (TC 1.A.8) family.

Its subcellular location is the cell membrane. The enzyme catalyses glycerol(in) = glycerol(out). In terms of biological role, mediates glycerol diffusion across the cytoplasmic membrane via a pore-type mechanism. This Buchnera aphidicola subsp. Acyrthosiphon pisum (strain APS) (Acyrthosiphon pisum symbiotic bacterium) protein is Glycerol uptake facilitator protein (glpF).